Here is a 59-residue protein sequence, read N- to C-terminus: Large ribosomal subunit protein bL32 (59 aa).

The protein belongs to the bacterial ribosomal protein bL32 family.

The protein is Large ribosomal subunit protein bL32 of Desulfitobacterium hafniense (strain Y51).